The following is a 104-amino-acid chain: Ribonuclease P protein component 4 (104 aa).

Residues Cys57, Cys60, Cys83, and Cys86 each contribute to the Zn(2+) site.

The protein belongs to the eukaryotic/archaeal RNase P protein component 4 family. Consists of a catalytic RNA component and at least 4-5 protein subunits. Zn(2+) is required as a cofactor.

The protein localises to the cytoplasm. It catalyses the reaction Endonucleolytic cleavage of RNA, removing 5'-extranucleotides from tRNA precursor.. Functionally, part of ribonuclease P, a protein complex that generates mature tRNA molecules by cleaving their 5'-ends. This Saccharolobus islandicus (strain M.14.25 / Kamchatka #1) (Sulfolobus islandicus) protein is Ribonuclease P protein component 4.